Consider the following 253-residue polypeptide: Triosephosphate isomerase (253 aa).

Substrate is bound at residue 9–11 (NWK). Residue His94 is the Electrophile of the active site. Glu163 serves as the catalytic Proton acceptor. Substrate-binding positions include Gly169, Ser209, and 230–231 (GG).

The protein belongs to the triosephosphate isomerase family. Homodimer.

It is found in the cytoplasm. The enzyme catalyses D-glyceraldehyde 3-phosphate = dihydroxyacetone phosphate. It functions in the pathway carbohydrate biosynthesis; gluconeogenesis. It participates in carbohydrate degradation; glycolysis; D-glyceraldehyde 3-phosphate from glycerone phosphate: step 1/1. Functionally, involved in the gluconeogenesis. Catalyzes stereospecifically the conversion of dihydroxyacetone phosphate (DHAP) to D-glyceraldehyde-3-phosphate (G3P). This is Triosephosphate isomerase from Dehalococcoides mccartyi (strain CBDB1).